A 502-amino-acid chain; its full sequence is UPF0371 protein CLH_2534 (502 aa).

The protein belongs to the UPF0371 family.

The chain is UPF0371 protein CLH_2534 from Clostridium botulinum (strain Alaska E43 / Type E3).